The sequence spans 90 residues: U7-theraphotoxin-Hhn1g (90 aa).

The first 19 residues, 1-19, serve as a signal peptide directing secretion; it reads MKTAIFTVVLALAVFAVLS. The propeptide occupies 20-50; sequence FGWEANEKALSEEFTELIHEKEAASETEARE. 3 disulfide bridges follow: Cys51–Cys65, Cys58–Cys70, and Cys64–Cys81.

The protein belongs to the neurotoxin 10 (Hwtx-1) family. 13 (Hntx-13) subfamily. Expressed by the venom gland.

It localises to the secreted. Ion channel inhibitor. In Cyriopagopus hainanus (Chinese bird spider), this protein is U7-theraphotoxin-Hhn1g.